Consider the following 203-residue polypeptide: Small ribosomal subunit protein uS4 (203 aa).

The tract at residues 20-44 is disordered; that stretch reads LPGLTRKRPKNTNPPGMHGAERKKK. An S4 RNA-binding domain is found at 92–155; sequence MRLDCIVFRL…SSRKLVAAYA (64 aa).

Belongs to the universal ribosomal protein uS4 family. As to quaternary structure, part of the 30S ribosomal subunit. Contacts protein S5. The interaction surface between S4 and S5 is involved in control of translational fidelity.

One of the primary rRNA binding proteins, it binds directly to 16S rRNA where it nucleates assembly of the body of the 30S subunit. Its function is as follows. With S5 and S12 plays an important role in translational accuracy. The protein is Small ribosomal subunit protein uS4 of Synechococcus sp. (strain JA-2-3B'a(2-13)) (Cyanobacteria bacterium Yellowstone B-Prime).